The following is a 340-amino-acid chain: Ketol-acid reductoisomerase (NADP(+)) (340 aa).

The KARI N-terminal Rossmann domain occupies Ala2 to Thr181. NADP(+) contacts are provided by residues Tyr25–Gln28, Arg48, Ser52, and Asp82–Gln85. Residue His107 is part of the active site. Residue Gly133 participates in NADP(+) binding. The KARI C-terminal knotted domain occupies Thr182–Val327. Mg(2+) is bound by residues Asp190, Glu194, Glu226, and Glu230. Ser251 contributes to the substrate binding site.

This sequence belongs to the ketol-acid reductoisomerase family. Mg(2+) serves as cofactor.

The catalysed reaction is (2R)-2,3-dihydroxy-3-methylbutanoate + NADP(+) = (2S)-2-acetolactate + NADPH + H(+). It carries out the reaction (2R,3R)-2,3-dihydroxy-3-methylpentanoate + NADP(+) = (S)-2-ethyl-2-hydroxy-3-oxobutanoate + NADPH + H(+). It functions in the pathway amino-acid biosynthesis; L-isoleucine biosynthesis; L-isoleucine from 2-oxobutanoate: step 2/4. The protein operates within amino-acid biosynthesis; L-valine biosynthesis; L-valine from pyruvate: step 2/4. Functionally, involved in the biosynthesis of branched-chain amino acids (BCAA). Catalyzes an alkyl-migration followed by a ketol-acid reduction of (S)-2-acetolactate (S2AL) to yield (R)-2,3-dihydroxy-isovalerate. In the isomerase reaction, S2AL is rearranged via a Mg-dependent methyl migration to produce 3-hydroxy-3-methyl-2-ketobutyrate (HMKB). In the reductase reaction, this 2-ketoacid undergoes a metal-dependent reduction by NADPH to yield (R)-2,3-dihydroxy-isovalerate. The chain is Ketol-acid reductoisomerase (NADP(+)) from Halalkalibacterium halodurans (strain ATCC BAA-125 / DSM 18197 / FERM 7344 / JCM 9153 / C-125) (Bacillus halodurans).